We begin with the raw amino-acid sequence, 229 residues long: tRNA (guanine-N(7)-)-methyltransferase (229 aa).

S-adenosyl-L-methionine-binding residues include Glu-62, Glu-87, Asp-114, and Asp-137. Asp-137 is an active-site residue. A substrate-binding site is contributed by Lys-141. The interaction with RNA stretch occupies residues 143–148 (KHNKRR). Residues Asp-173 and 208 to 211 (TKFE) each bind substrate.

The protein belongs to the class I-like SAM-binding methyltransferase superfamily. TrmB family.

The catalysed reaction is guanosine(46) in tRNA + S-adenosyl-L-methionine = N(7)-methylguanosine(46) in tRNA + S-adenosyl-L-homocysteine. It participates in tRNA modification; N(7)-methylguanine-tRNA biosynthesis. Functionally, catalyzes the formation of N(7)-methylguanine at position 46 (m7G46) in tRNA. The protein is tRNA (guanine-N(7)-)-methyltransferase of Francisella tularensis subsp. novicida (strain U112).